The primary structure comprises 374 residues: tRNA-specific 2-thiouridylase MnmA (374 aa).

Residues 17-24 and Met-43 each bind ATP; that span reads GMSGGVDS. The interaction with target base in tRNA stretch occupies residues 103–105; the sequence is NPD. Cys-108 functions as the Nucleophile in the catalytic mechanism. Cys-108 and Cys-204 are joined by a disulfide. Gly-132 provides a ligand contact to ATP. Residues 154–156 form an interaction with tRNA region; the sequence is KDQ. The active-site Cysteine persulfide intermediate is the Cys-204. The tract at residues 316 to 317 is interaction with tRNA; it reads RY.

This sequence belongs to the MnmA/TRMU family.

Its subcellular location is the cytoplasm. It catalyses the reaction S-sulfanyl-L-cysteinyl-[protein] + uridine(34) in tRNA + AH2 + ATP = 2-thiouridine(34) in tRNA + L-cysteinyl-[protein] + A + AMP + diphosphate + H(+). In terms of biological role, catalyzes the 2-thiolation of uridine at the wobble position (U34) of tRNA, leading to the formation of s(2)U34. This chain is tRNA-specific 2-thiouridylase MnmA, found in Pseudomonas putida (strain GB-1).